Reading from the N-terminus, the 104-residue chain is Large ribosomal subunit protein bL21c (104 aa).

This sequence belongs to the bacterial ribosomal protein bL21 family. In terms of assembly, part of the 50S ribosomal subunit.

It is found in the plastid. The protein resides in the cyanelle. This protein binds to 23S rRNA. This chain is Large ribosomal subunit protein bL21c, found in Cyanophora paradoxa.